The primary structure comprises 443 residues: Dynein regulatory complex protein 9 (443 aa).

Disordered stretches follow at residues 1-40 and 415-443; these read MEED…LPKE and GFKM…GKKK. The 30-residue stretch at 393–422 folds into the IQ domain; sequence ELKSVIKLQAWWRGTMIRREIGGFKMPKDK. Positions 415 to 430 are enriched in basic and acidic residues; sequence GFKMPKDKVDSKDSKG. A compositionally biased stretch (basic residues) spans 431-443; it reads KGKGKDKRRGKKK.

It belongs to the DRC9 family. Component of the nexin-dynein regulatory complex (N-DRC). Interacts (via IQ domain) with CALM when calcium levels are low. Does not interact with CALM in the presence of Ca(2+). Interacts with the HSP70 proteins HSPA1L and HSPA8. May form a complex with CAMK4 and HSP70.

The protein resides in the cytoplasm. Its subcellular location is the cell projection. It is found in the cilium. It localises to the flagellum. The protein localises to the cytoskeleton. The protein resides in the flagellum axoneme. In terms of biological role, component of the nexin-dynein regulatory complex (N-DRC), a key regulator of ciliary/flagellar motility which maintains the alignment and integrity of the distal axoneme and regulates microtubule sliding in motile axonemes. Binds calmodulin when cellular Ca(2+) levels are low and thereby contributes to the regulation of calcium and calmodulin-dependent protein kinase IV (CAMK4) activity; contributes to the regulation of CAMK4 signaling cascades. Required for normal axoneme assembly in sperm flagella, normal sperm tail formation and for male fertility. The chain is Dynein regulatory complex protein 9 (IQCG) from Macaca fascicularis (Crab-eating macaque).